An 807-amino-acid chain; its full sequence is Glycerol-3-phosphate acyltransferase (807 aa).

The HXXXXD motif signature appears at 308 to 313; sequence CHRSHM.

The protein belongs to the GPAT/DAPAT family.

It is found in the cell inner membrane. The catalysed reaction is sn-glycerol 3-phosphate + an acyl-CoA = a 1-acyl-sn-glycero-3-phosphate + CoA. It functions in the pathway phospholipid metabolism; CDP-diacylglycerol biosynthesis; CDP-diacylglycerol from sn-glycerol 3-phosphate: step 1/3. The protein is Glycerol-3-phosphate acyltransferase of Shewanella pealeana (strain ATCC 700345 / ANG-SQ1).